Reading from the N-terminus, the 330-residue chain is Aspartate--ammonia ligase (330 aa).

The protein belongs to the class-II aminoacyl-tRNA synthetase family. AsnA subfamily.

The protein resides in the cytoplasm. It carries out the reaction L-aspartate + NH4(+) + ATP = L-asparagine + AMP + diphosphate + H(+). It participates in amino-acid biosynthesis; L-asparagine biosynthesis; L-asparagine from L-aspartate (ammonia route): step 1/1. This is Aspartate--ammonia ligase from Escherichia coli O17:K52:H18 (strain UMN026 / ExPEC).